The following is a 70-amino-acid chain: Large ribosomal subunit protein uL30 (70 aa).

Belongs to the universal ribosomal protein uL30 family. In terms of assembly, part of the 50S ribosomal subunit.

The protein is Large ribosomal subunit protein uL30 of Renibacterium salmoninarum (strain ATCC 33209 / DSM 20767 / JCM 11484 / NBRC 15589 / NCIMB 2235).